Consider the following 398-residue polypeptide: 1-deoxy-D-xylulose 5-phosphate reductoisomerase (398 aa).

Residues Thr-10, Gly-11, Ser-12, Val-13, Gly-36, Lys-37, Asn-38, and Asn-124 each contribute to the NADPH site. Lys-125 lines the 1-deoxy-D-xylulose 5-phosphate pocket. Residue Glu-126 participates in NADPH binding. A Mn(2+)-binding site is contributed by Asp-150. Residues Ser-151, Glu-152, Ser-186, and His-209 each contribute to the 1-deoxy-D-xylulose 5-phosphate site. Residue Glu-152 coordinates Mn(2+). Gly-215 serves as a coordination point for NADPH. 4 residues coordinate 1-deoxy-D-xylulose 5-phosphate: Ser-222, Asn-227, Lys-228, and Glu-231. Glu-231 provides a ligand contact to Mn(2+).

The protein belongs to the DXR family. In terms of assembly, homodimer. Mg(2+) is required as a cofactor. It depends on Mn(2+) as a cofactor.

The enzyme catalyses 2-C-methyl-D-erythritol 4-phosphate + NADP(+) = 1-deoxy-D-xylulose 5-phosphate + NADPH + H(+). It participates in isoprenoid biosynthesis; isopentenyl diphosphate biosynthesis via DXP pathway; isopentenyl diphosphate from 1-deoxy-D-xylulose 5-phosphate: step 1/6. Catalyzes the NADPH-dependent rearrangement and reduction of 1-deoxy-D-xylulose-5-phosphate (DXP) to 2-C-methyl-D-erythritol 4-phosphate (MEP). This is 1-deoxy-D-xylulose 5-phosphate reductoisomerase from Photorhabdus laumondii subsp. laumondii (strain DSM 15139 / CIP 105565 / TT01) (Photorhabdus luminescens subsp. laumondii).